The primary structure comprises 337 residues: Heme A synthase (337 aa).

A run of 5 helical transmembrane segments spans residues 6–26, 87–107, 119–139, 154–174, and 192–212; these read ITKWLCINCIMVIATIVIGGI, FIHRLLGRITALIYIVPVIYF, LPYIIALLLFCVQGFIGWYMV, LAFHLIIAVIIYHILFYQLIK, and LIFSGIAITVVYVQIFLGALV. His-256 is a heme binding site. 3 helical membrane-spanning segments follow: residues 258-278, 285-305, and 308-328; these read LVGYSVFLVVVVLIICLLKIE, IAYFLMIALFMQVSTGIITLL, and VPIIIASIHQLFAIILLSVII. His-316 contributes to the heme binding site.

The protein belongs to the COX15/CtaA family. Type 2 subfamily. As to quaternary structure, interacts with CtaB. Heme b is required as a cofactor.

It is found in the cell membrane. The enzyme catalyses Fe(II)-heme o + 2 A + H2O = Fe(II)-heme a + 2 AH2. Its pathway is porphyrin-containing compound metabolism; heme A biosynthesis; heme A from heme O: step 1/1. In terms of biological role, catalyzes the conversion of heme O to heme A by two successive hydroxylations of the methyl group at C8. The first hydroxylation forms heme I, the second hydroxylation results in an unstable dihydroxymethyl group, which spontaneously dehydrates, resulting in the formyl group of heme A. The protein is Heme A synthase of Rickettsia rickettsii (strain Iowa).